Consider the following 305-residue polypeptide: Ornithine carbamoyltransferase (305 aa).

Residues 53 to 56 (STRT), Q80, R104, and 131 to 134 (HPCQ) contribute to the carbamoyl phosphate site. Residues N162, D219, and 223-224 (SM) contribute to the L-ornithine site. Carbamoyl phosphate contacts are provided by residues 259–260 (CL) and R287.

Belongs to the aspartate/ornithine carbamoyltransferase superfamily. OTCase family.

Its subcellular location is the cytoplasm. The enzyme catalyses carbamoyl phosphate + L-ornithine = L-citrulline + phosphate + H(+). It functions in the pathway amino-acid biosynthesis; L-arginine biosynthesis; L-arginine from L-ornithine and carbamoyl phosphate: step 1/3. In terms of biological role, reversibly catalyzes the transfer of the carbamoyl group from carbamoyl phosphate (CP) to the N(epsilon) atom of ornithine (ORN) to produce L-citrulline. The protein is Ornithine carbamoyltransferase of Psychrobacter cryohalolentis (strain ATCC BAA-1226 / DSM 17306 / VKM B-2378 / K5).